The chain runs to 591 residues: Aspartate--tRNA(Asp/Asn) ligase (591 aa).

Residue glutamate 174 participates in L-aspartate binding. The aspartate stretch occupies residues glutamine 198–lysine 201. Position 220 (arginine 220) interacts with L-aspartate. Residues arginine 220–glutamate 222 and glutamine 229 each bind ATP. Histidine 450 contacts L-aspartate. Residue glutamate 483 coordinates ATP. Arginine 490 is an L-aspartate binding site. Glycine 535 to arginine 538 is an ATP binding site.

It belongs to the class-II aminoacyl-tRNA synthetase family. Type 1 subfamily. Homodimer.

It is found in the cytoplasm. It catalyses the reaction tRNA(Asx) + L-aspartate + ATP = L-aspartyl-tRNA(Asx) + AMP + diphosphate. Functionally, aspartyl-tRNA synthetase with relaxed tRNA specificity since it is able to aspartylate not only its cognate tRNA(Asp) but also tRNA(Asn). Reaction proceeds in two steps: L-aspartate is first activated by ATP to form Asp-AMP and then transferred to the acceptor end of tRNA(Asp/Asn). This chain is Aspartate--tRNA(Asp/Asn) ligase, found in Pseudomonas savastanoi pv. phaseolicola (strain 1448A / Race 6) (Pseudomonas syringae pv. phaseolicola (strain 1448A / Race 6)).